Consider the following 372-residue polypeptide: GDP-mannose 4,6 dehydratase (372 aa).

Residues 1-20 (MAHAPARCPSARGSGDGEMG) form a disordered region. The residue at position 2 (alanine 2) is an N-acetylalanine. NADP(+)-binding positions include 30–35 (GITGQD), 55–58 (RRSS), 86–87 (DL), 108–112 (LGAQS), and tyrosine 123. The active site involves threonine 155. Active-site nucleophile residues include glutamate 157 and tyrosine 179. 3 residues coordinate NADP(+): lysine 183, histidine 209, and arginine 214. Tyrosine 323 bears the Phosphotyrosine mark.

Belongs to the NAD(P)-dependent epimerase/dehydratase family. GDP-mannose 4,6-dehydratase subfamily. The cofactor is NADP(+). In terms of tissue distribution, highly expressed in pancreas and small intestine. Expressed in thymus, protstate, colon, heart, placenta, liver and kidney. Expressed at low levels in spleen, testis, brain and lung.

It catalyses the reaction GDP-alpha-D-mannose = GDP-4-dehydro-alpha-D-rhamnose + H2O. Its pathway is nucleotide-sugar biosynthesis; GDP-L-fucose biosynthesis via de novo pathway; GDP-L-fucose from GDP-alpha-D-mannose: step 1/2. Its activity is regulated as follows. Inhibited by GDP-fucose. In terms of biological role, catalyzes the conversion of GDP-D-mannose to GDP-4-dehydro-6-deoxy-D-mannose. This Homo sapiens (Human) protein is GDP-mannose 4,6 dehydratase.